The sequence spans 95 residues: Co-chaperonin GroES (95 aa).

Belongs to the GroES chaperonin family. In terms of assembly, heptamer of 7 subunits arranged in a ring. Interacts with the chaperonin GroEL.

The protein resides in the cytoplasm. Its function is as follows. Together with the chaperonin GroEL, plays an essential role in assisting protein folding. The GroEL-GroES system forms a nano-cage that allows encapsulation of the non-native substrate proteins and provides a physical environment optimized to promote and accelerate protein folding. GroES binds to the apical surface of the GroEL ring, thereby capping the opening of the GroEL channel. The polypeptide is Co-chaperonin GroES (Dichelobacter nodosus (strain VCS1703A)).